The primary structure comprises 559 residues: Formate--tetrahydrofolate ligase (559 aa).

68–75 serves as a coordination point for ATP; the sequence is TPAGEGKT.

Belongs to the formate--tetrahydrofolate ligase family.

The enzyme catalyses (6S)-5,6,7,8-tetrahydrofolate + formate + ATP = (6R)-10-formyltetrahydrofolate + ADP + phosphate. The protein operates within one-carbon metabolism; tetrahydrofolate interconversion. The sequence is that of Formate--tetrahydrofolate ligase from Rhizobium etli (strain CIAT 652).